The primary structure comprises 167 residues: Probable chemoreceptor glutamine deamidase CheD (167 aa).

Belongs to the CheD family.

The enzyme catalyses L-glutaminyl-[protein] + H2O = L-glutamyl-[protein] + NH4(+). Its function is as follows. Probably deamidates glutamine residues to glutamate on methyl-accepting chemotaxis receptors (MCPs), playing an important role in chemotaxis. This Moorella thermoacetica (strain ATCC 39073 / JCM 9320) protein is Probable chemoreceptor glutamine deamidase CheD.